The following is a 469-amino-acid chain: Probable cobyric acid synthase (469 aa).

A GATase cobBQ-type domain is found at 241 to 427 (SGSIGIVRYP…VHGILENNEF (187 aa)). The active-site Nucleophile is cysteine 319. The active site involves histidine 419.

Belongs to the CobB/CobQ family. CobQ subfamily.

It functions in the pathway cofactor biosynthesis; adenosylcobalamin biosynthesis. Catalyzes amidations at positions B, D, E, and G on adenosylcobyrinic A,C-diamide. NH(2) groups are provided by glutamine, and one molecule of ATP is hydrogenolyzed for each amidation. This chain is Probable cobyric acid synthase, found in Picrophilus torridus (strain ATCC 700027 / DSM 9790 / JCM 10055 / NBRC 100828 / KAW 2/3).